The sequence spans 243 residues: Carboxy-S-adenosyl-L-methionine synthase (243 aa).

Residues Y40, 65 to 67 (GCS), 90 to 91 (DN), 118 to 119 (DI), N133, and R200 contribute to the S-adenosyl-L-methionine site.

This sequence belongs to the class I-like SAM-binding methyltransferase superfamily. Cx-SAM synthase family. Homodimer.

It carries out the reaction prephenate + S-adenosyl-L-methionine = carboxy-S-adenosyl-L-methionine + 3-phenylpyruvate + H2O. Catalyzes the conversion of S-adenosyl-L-methionine (SAM) to carboxy-S-adenosyl-L-methionine (Cx-SAM). This chain is Carboxy-S-adenosyl-L-methionine synthase, found in Shewanella woodyi (strain ATCC 51908 / MS32).